The sequence spans 197 residues: HTH-type transcriptional regulator BetI (197 aa).

The region spanning 8 to 68 (PIRRQQLIEA…ATMRYLMNAL (61 aa)) is the HTH tetR-type domain. The segment at residues 31–50 (SIALIARLAGVSNGIISHYF) is a DNA-binding region (H-T-H motif).

It functions in the pathway amine and polyamine biosynthesis; betaine biosynthesis via choline pathway [regulation]. Its function is as follows. Repressor involved in the biosynthesis of the osmoprotectant glycine betaine. It represses transcription of the choline transporter BetT and the genes of BetAB involved in the synthesis of glycine betaine. In Pseudomonas fluorescens (strain SBW25), this protein is HTH-type transcriptional regulator BetI.